Reading from the N-terminus, the 1409-residue chain is DNA-directed RNA polymerase subunit beta' (1409 aa).

Zn(2+)-binding residues include Cys70, Cys72, Cys85, and Cys88. Residues Asp460, Asp462, and Asp464 each contribute to the Mg(2+) site. Residues Cys814, Cys888, Cys895, and Cys898 each contribute to the Zn(2+) site.

It belongs to the RNA polymerase beta' chain family. As to quaternary structure, the RNAP catalytic core consists of 2 alpha, 1 beta, 1 beta' and 1 omega subunit. When a sigma factor is associated with the core the holoenzyme is formed, which can initiate transcription. Mg(2+) serves as cofactor. Zn(2+) is required as a cofactor.

It carries out the reaction RNA(n) + a ribonucleoside 5'-triphosphate = RNA(n+1) + diphosphate. In terms of biological role, DNA-dependent RNA polymerase catalyzes the transcription of DNA into RNA using the four ribonucleoside triphosphates as substrates. The chain is DNA-directed RNA polymerase subunit beta' from Shewanella violacea.